Here is a 500-residue protein sequence, read N- to C-terminus: NAD(P)H-quinone oxidoreductase chain 4, chloroplastic (500 aa).

Transmembrane regions (helical) follow at residues 3–23 (FFPWLTIIVILPIFAGSIILF), 37–57 (ICICILELLLTTYAFCYHFQL), 87–107 (IGPILLTGFITTLATLAAWPV), 113–130 (LFHFLMLAMYSGQIGLFA), 134–154 (LLLFFIMWELELIPVYLLLSM), 167–187 (FILYTAGGSVFLLMGVLGVGL), 208–228 (ALEIILYIGFFIAFAVKSPII), 242–262 (HYSTCMLLAGILLKMGAYGLI), 272–292 (AHSIFSPWLVIVGTIQIIYAA), 305–325 (IAYSSVSHMGFILIGIGSIND), 330–350 (GAILQIVSHGFIGAALFFLAG), 364–384 (MGGIAIPMPKIFTMFSSFSMA), 386–406 (LALPGMSGFVAEFIVFFGIIT), 411–431 (LLISKLGITFVMAIGIILTPI), and 462–482 (LFVSIAIFIPVIGIGMYPDFV).

The protein belongs to the complex I subunit 4 family.

The protein localises to the plastid. It localises to the chloroplast thylakoid membrane. The enzyme catalyses a plastoquinone + NADH + (n+1) H(+)(in) = a plastoquinol + NAD(+) + n H(+)(out). It carries out the reaction a plastoquinone + NADPH + (n+1) H(+)(in) = a plastoquinol + NADP(+) + n H(+)(out). The polypeptide is NAD(P)H-quinone oxidoreductase chain 4, chloroplastic (Daucus carota (Wild carrot)).